The following is a 37-amino-acid chain: Large ribosomal subunit protein bL36 (37 aa).

Belongs to the bacterial ribosomal protein bL36 family.

The sequence is that of Large ribosomal subunit protein bL36 from Dehalococcoides mccartyi (strain ATCC BAA-2266 / KCTC 15142 / 195) (Dehalococcoides ethenogenes (strain 195)).